We begin with the raw amino-acid sequence, 126 residues long: Large ribosomal subunit protein bL12 (126 aa).

Belongs to the bacterial ribosomal protein bL12 family. In terms of assembly, homodimer. Part of the ribosomal stalk of the 50S ribosomal subunit. Forms a multimeric L10(L12)X complex, where L10 forms an elongated spine to which 2 to 4 L12 dimers bind in a sequential fashion. Binds GTP-bound translation factors.

Functionally, forms part of the ribosomal stalk which helps the ribosome interact with GTP-bound translation factors. Is thus essential for accurate translation. The sequence is that of Large ribosomal subunit protein bL12 from Nocardia farcinica (strain IFM 10152).